The primary structure comprises 362 residues: S-adenosylmethionine decarboxylase proenzyme (362 aa).

Catalysis depends on residues Glu11 and Glu14. Catalysis depends on Ser71, which acts as the Schiff-base intermediate with substrate; via pyruvic acid. Ser71 carries the pyruvic acid (Ser); by autocatalysis modification. Residue Cys85 is the Proton donor; for catalytic activity of the active site. Catalysis depends on proton acceptor; for processing activity residues Ser234 and His247.

The protein belongs to the eukaryotic AdoMetDC family. Requires pyruvate as cofactor. Post-translationally, is synthesized initially as an inactive proenzyme. Formation of the active enzyme involves a self-maturation process in which the active site pyruvoyl group is generated from an internal serine residue via an autocatalytic post-translational modification. Two non-identical subunits are generated from the proenzyme in this reaction, and the pyruvate is formed at the N-terminus of the alpha chain, which is derived from the carboxyl end of the proenzyme. The post-translation cleavage follows an unusual pathway, termed non-hydrolytic serinolysis, in which the side chain hydroxyl group of the serine supplies its oxygen atom to form the C-terminus of the beta chain, while the remainder of the serine residue undergoes an oxidative deamination to produce ammonia and the pyruvoyl group blocking the N-terminus of the alpha chain.

It catalyses the reaction S-adenosyl-L-methionine + H(+) = S-adenosyl 3-(methylsulfanyl)propylamine + CO2. It participates in amine and polyamine biosynthesis; S-adenosylmethioninamine biosynthesis; S-adenosylmethioninamine from S-adenosyl-L-methionine: step 1/1. In Ipomoea batatas (Sweet potato), this protein is S-adenosylmethionine decarboxylase proenzyme (SAMDC).